The following is a 432-amino-acid chain: Adenylosuccinate synthetase (432 aa).

Residues 13-19 (GDEGKGK) and 41-43 (GHT) each bind GTP. The active-site Proton acceptor is Asp-14. Positions 14 and 41 each coordinate Mg(2+). IMP contacts are provided by residues 14–17 (DEGK), 39–42 (NAGH), Thr-130, Arg-144, Gln-225, Thr-240, and Arg-304. Catalysis depends on His-42, which acts as the Proton donor. 300–306 (ATTGRRR) provides a ligand contact to substrate. Residues Arg-306, 332–334 (KLD), and 415–417 (STG) each bind GTP.

The protein belongs to the adenylosuccinate synthetase family. As to quaternary structure, homodimer. Mg(2+) is required as a cofactor.

It localises to the cytoplasm. It carries out the reaction IMP + L-aspartate + GTP = N(6)-(1,2-dicarboxyethyl)-AMP + GDP + phosphate + 2 H(+). The protein operates within purine metabolism; AMP biosynthesis via de novo pathway; AMP from IMP: step 1/2. In terms of biological role, plays an important role in the de novo pathway of purine nucleotide biosynthesis. Catalyzes the first committed step in the biosynthesis of AMP from IMP. This Erwinia tasmaniensis (strain DSM 17950 / CFBP 7177 / CIP 109463 / NCPPB 4357 / Et1/99) protein is Adenylosuccinate synthetase.